The sequence spans 527 residues: SusD-like protein P25 (527 aa).

An N-terminal signal peptide occupies residues 1-15 (MKIQNIIVYVFLIFS). Cysteine 16 carries the N-palmitoyl cysteine lipid modification. Cysteine 16 carries S-diacylglycerol cysteine lipidation.

This sequence belongs to the SusD family.

The protein localises to the cell outer membrane. Polysaccharide-binding protein probably involved in ulvan degradation. Ulvan is the main polysaccharide component of the Ulvales (green seaweed) cell wall. It is composed of disaccharide building blocks comprising 3-sulfated rhamnose (Rha3S) linked to D-glucuronic acid (GlcA), L-iduronic acid (IduA), or D-xylose (Xyl). The SusD-like protein may mediate ulvan oligomer-binding before transport in the periplasm for further degradation. The protein is SusD-like protein P25 of Formosa agariphila (strain DSM 15362 / KCTC 12365 / LMG 23005 / KMM 3901 / M-2Alg 35-1).